A 365-amino-acid chain; its full sequence is MFDMYIESGGKKLRCGYTTGSCAAAAAKAATYMLFNKKDISVIEIDTPKNIKLNLEIQDIQVEKNSISCSIVKDGGDDIDATSGLEIFAKAEEVEEGFELCGGEGVGVVTKEGLFVEKGQPAINPVPREMIKKEVLSVLPKDKGVRITIFVPRGREIAKKTFNPRLGIVNGISILGTTGIVYPMSEEALKESIRIEIRQKAVNNKDLVFVFGNMGERFLRERGYKKDNIVVISNYVGFSIECALAQGIKDLTIVGHIGKLSKIAFGCFNTHSRVSDVRLEVIALELTLMGYDLELVQKVLDQKTSEGAVRLLGEDFPMLYERIGEKVLNRLDIYAYGEANFNILMYYGSKEMKLLYESKNSNLFD.

Belongs to the CbiD family.

It carries out the reaction Co-precorrin-5B + S-adenosyl-L-methionine = Co-precorrin-6A + S-adenosyl-L-homocysteine. It participates in cofactor biosynthesis; adenosylcobalamin biosynthesis; cob(II)yrinate a,c-diamide from sirohydrochlorin (anaerobic route): step 6/10. Its function is as follows. Catalyzes the methylation of C-1 in cobalt-precorrin-5B to form cobalt-precorrin-6A. The polypeptide is Cobalt-precorrin-5B C(1)-methyltransferase (Clostridium perfringens (strain 13 / Type A)).